The following is a 103-amino-acid chain: Sec-independent protein translocase protein TatA (103 aa).

Residues 1–21 (MGNIFSPTHLIVILLIIIVLF) form a helical membrane-spanning segment. A disordered region spans residues 77 to 103 (KRATTRVKGSSSSRKGKTSVVKKQRVK). The segment covering 90-103 (RKGKTSVVKKQRVK) has biased composition (basic residues).

The protein belongs to the TatA/E family. In terms of assembly, the Tat system comprises two distinct complexes: a TatABC complex, containing multiple copies of TatA, TatB and TatC subunits, and a separate TatA complex, containing only TatA subunits. Substrates initially bind to the TatABC complex, which probably triggers association of the separate TatA complex to form the active translocon.

It localises to the cell inner membrane. Its function is as follows. Part of the twin-arginine translocation (Tat) system that transports large folded proteins containing a characteristic twin-arginine motif in their signal peptide across membranes. TatA could form the protein-conducting channel of the Tat system. The protein is Sec-independent protein translocase protein TatA of Bartonella henselae (strain ATCC 49882 / DSM 28221 / CCUG 30454 / Houston 1) (Rochalimaea henselae).